Reading from the N-terminus, the 298-residue chain is Esterase Rv0045c (298 aa).

Catalysis depends on S122, which acts as the Nucleophile. Active-site residues include D146 and H277.

The protein belongs to the AB hydrolase superfamily. As to quaternary structure, monomer.

The catalysed reaction is a carboxylic ester + H2O = an alcohol + a carboxylate + H(+). It catalyses the reaction a butanoate ester + H2O = an aliphatic alcohol + butanoate + H(+). The enzyme catalyses an acetyl ester + H2O = an aliphatic alcohol + acetate + H(+). It carries out the reaction a hexanoate ester + H2O = an aliphatic alcohol + hexanoate + H(+). The catalysed reaction is a tetradecanoate ester + H2O = an aliphatic alcohol + tetradecanoate + H(+). Hydrolysis of a fluorogenic ester substrate (MOAME) is allosterically inhibited by divalent transition metal cations (Cu(2+), Zn(2+), Ni(2+) and Co(2+)). Inhibition is largely due to a two order of magnitude drop in kcat, with relatively little change in KM. The thermal stability decreases with increasing concentrations of Ni(2+). Functionally, esterase likely involved in ester/lipid metabolism. Shows strong substrate selectivity toward short, straight chain alkyl esters with the highest activity toward four atom chains. The physiological substrate is unknown. Is able to hydrolyze ester bonds within a wide range of p-nitrophenyl derivatives (C2-C14) in vitro. In Mycobacterium tuberculosis (strain ATCC 25618 / H37Rv), this protein is Esterase Rv0045c.